Here is a 207-residue protein sequence, read N- to C-terminus: MAAAWPSGPSAPEAVTARLVGVLWFVSVTTGPWGAVATSAGGEESLKCEDLKVGQYICKDPKINDATQEPVNCTNYTAHVSCFPAPNITCKDSSGNETHFTGNEVGFFKPISCRNVNGYSYKVAVALSLFLGWLGADRFYLGYPALGLLKFCTVGFCGIGSLIDFILISMQIVGPSDGSSYIIDYYGTRLTRLSITNETFRKTQLYP.

Residues 1 to 37 (MAAAWPSGPSAPEAVTARLVGVLWFVSVTTGPWGAVA) form the signal peptide. The Extracellular segment spans residues 40–128 (AGGEESLKCE…YSYKVAVALS (89 aa)). 4 N-linked (GlcNAc...) asparagine glycosylation sites follow: asparagine 72, asparagine 75, asparagine 87, and asparagine 96. The 49-residue stretch at 118 to 166 (GYSYKVAVALSLFLGWLGADRFYLGYPALGLLKFCTVGFCGIGSLIDFI) folds into the TM2 domain. Residues 129 to 149 (LFLGWLGADRFYLGYPALGLL) traverse the membrane as a helical segment. Topologically, residues 150 to 153 (KFCT) are cytoplasmic. A helical membrane pass occupies residues 154 to 174 (VGFCGIGSLIDFILISMQIVG). Residues 175 to 207 (PSDGSSYIIDYYGTRLTRLSITNETFRKTQLYP) lie on the Extracellular side of the membrane. Asparagine 197 carries N-linked (GlcNAc...) asparagine glycosylation.

It belongs to the TM2 family. As to quaternary structure, interacts with APP beta-APP42 (amyloid-beta protein 42). N-glycosylated. In terms of tissue distribution, widely expressed.

The protein resides in the membrane. In terms of biological role, may participate in amyloid-beta-induced apoptosis via its interaction with beta-APP42. The sequence is that of TM2 domain-containing protein 1 (TM2D1) from Homo sapiens (Human).